Consider the following 131-residue polypeptide: POU domain, class 3, transcription factor 3 (131 aa).

The POU-specific domain maps to F1–D60. A DNA-binding region (homeobox) is located at residues K78–Q131.

This sequence belongs to the POU transcription factor family. Class-3 subfamily. In terms of assembly, homodimer. In terms of tissue distribution, brain.

It is found in the nucleus. In terms of biological role, transcription factor that acts synergistically with SOX11 and SOX4. Plays a role in neuronal development. Is implicated in an enhancer activity at the embryonic met-mesencephalic junction; the enhancer element contains the octamer motif (5'-ATTTGCAT-3'). This chain is POU domain, class 3, transcription factor 3 (POU3F3), found in Sus scrofa (Pig).